The chain runs to 557 residues: Ribonuclease J 2 (557 aa).

Zn(2+) is bound by residues His76, His78, His144, and Glu166. 366 to 370 (HASSH) serves as a coordination point for substrate.

This sequence belongs to the metallo-beta-lactamase superfamily. RNA-metabolizing metallo-beta-lactamase-like family. Bacterial RNase J subfamily. In terms of assembly, homodimer, may be a subunit of the RNA degradosome. It depends on Zn(2+) as a cofactor.

Its subcellular location is the cytoplasm. An RNase that has 5'-3' exonuclease and possibly endoonuclease activity. Involved in maturation of rRNA and in some organisms also mRNA maturation and/or decay. The chain is Ribonuclease J 2 from Staphylococcus saprophyticus subsp. saprophyticus (strain ATCC 15305 / DSM 20229 / NCIMB 8711 / NCTC 7292 / S-41).